Here is a 451-residue protein sequence, read N- to C-terminus: uncharacterized protein (451 aa).

Positions Asn2–Lys60 constitute a TRAM domain. [4Fe-4S] cluster contacts are provided by Cys73, Cys79, Cys82, and Cys162. S-adenosyl-L-methionine contacts are provided by Gln283, Tyr312, Asp333, and Asp381. Cys408 serves as the catalytic Nucleophile.

Belongs to the class I-like SAM-binding methyltransferase superfamily. RNA M5U methyltransferase family.

This is an uncharacterized protein from Streptococcus agalactiae serotype III (strain NEM316).